A 444-amino-acid polypeptide reads, in one-letter code: Elongation factor 1-alpha (444 aa).

The tr-type G domain occupies 15-236 (KPHINLAVVG…VLDTFQPPPR (222 aa)). A G1 region spans residues 24–31 (GHVDNGKS). 24–31 (GHVDNGKS) contacts GTP. Serine 31 contacts Mg(2+). The G2 stretch occupies residues 80–84 (GVTIE). Residues 101-104 (DLPG) form a G3 region. GTP contacts are provided by residues 101 to 105 (DLPGH) and 163 to 166 (NKMD). The interval 163 to 166 (NKMD) is G4. The G5 stretch occupies residues 202–204 (SAI).

The protein belongs to the TRAFAC class translation factor GTPase superfamily. Classic translation factor GTPase family. EF-Tu/EF-1A subfamily.

It localises to the cytoplasm. It carries out the reaction GTP + H2O = GDP + phosphate + H(+). Functionally, GTP hydrolase that promotes the GTP-dependent binding of aminoacyl-tRNA to the A-site of ribosomes during protein biosynthesis. This is Elongation factor 1-alpha from Pyrobaculum calidifontis (strain DSM 21063 / JCM 11548 / VA1).